Here is a 245-residue protein sequence, read N- to C-terminus: 1-(5-phosphoribosyl)-5-[(5-phosphoribosylamino)methylideneamino] imidazole-4-carboxamide isomerase (245 aa).

The active-site Proton acceptor is Asp-7. The active-site Proton donor is Asp-129.

The protein belongs to the HisA/HisF family.

It localises to the cytoplasm. It catalyses the reaction 1-(5-phospho-beta-D-ribosyl)-5-[(5-phospho-beta-D-ribosylamino)methylideneamino]imidazole-4-carboxamide = 5-[(5-phospho-1-deoxy-D-ribulos-1-ylimino)methylamino]-1-(5-phospho-beta-D-ribosyl)imidazole-4-carboxamide. The protein operates within amino-acid biosynthesis; L-histidine biosynthesis; L-histidine from 5-phospho-alpha-D-ribose 1-diphosphate: step 4/9. The protein is 1-(5-phosphoribosyl)-5-[(5-phosphoribosylamino)methylideneamino] imidazole-4-carboxamide isomerase of Salmonella choleraesuis (strain SC-B67).